Consider the following 290-residue polypeptide: Probable lipid hydrolase 463L (290 aa).

A run of 2 helical transmembrane segments spans residues 26 to 46 (TLVL…LNGL) and 53 to 73 (ISTF…SIGY). Residues 27–207 (LVLSGGAMRG…WNNFPIDIAI (181 aa)) form the PNPLA domain. The short motif at 58 to 62 (GISSG) is the GXSXG element. Catalysis depends on Ser60, which acts as the Nucleophile. Asp194 (proton acceptor) is an active-site residue. Positions 194-196 (DGG) match the DGA/G motif.

It is found in the membrane. Functionally, probable lipid hydrolase. This chain is Probable lipid hydrolase 463L, found in Invertebrate iridescent virus 6 (IIV-6).